Consider the following 341-residue polypeptide: Methionine import ATP-binding protein MetN (341 aa).

Residues Ile9–Phe247 enclose the ABC transporter domain. Gly41–Ser48 is an ATP binding site.

This sequence belongs to the ABC transporter superfamily. Methionine importer (TC 3.A.1.24) family. In terms of assembly, the complex is composed of two ATP-binding proteins (MetN), two transmembrane proteins (MetI) and a solute-binding protein (MetQ).

The protein localises to the cell inner membrane. It carries out the reaction L-methionine(out) + ATP + H2O = L-methionine(in) + ADP + phosphate + H(+). It catalyses the reaction D-methionine(out) + ATP + H2O = D-methionine(in) + ADP + phosphate + H(+). Its function is as follows. Part of the ABC transporter complex MetNIQ involved in methionine import. Responsible for energy coupling to the transport system. The chain is Methionine import ATP-binding protein MetN from Chlamydia caviae (strain ATCC VR-813 / DSM 19441 / 03DC25 / GPIC) (Chlamydophila caviae).